A 250-amino-acid chain; its full sequence is 1-(5-phosphoribosyl)-5-[(5-phosphoribosylamino)methylideneamino] imidazole-4-carboxamide isomerase (250 aa).

Catalysis depends on Asp-12, which acts as the Proton acceptor. Asp-134 (proton donor) is an active-site residue.

It belongs to the HisA/HisF family.

It is found in the cytoplasm. It catalyses the reaction 1-(5-phospho-beta-D-ribosyl)-5-[(5-phospho-beta-D-ribosylamino)methylideneamino]imidazole-4-carboxamide = 5-[(5-phospho-1-deoxy-D-ribulos-1-ylimino)methylamino]-1-(5-phospho-beta-D-ribosyl)imidazole-4-carboxamide. It participates in amino-acid biosynthesis; L-histidine biosynthesis; L-histidine from 5-phospho-alpha-D-ribose 1-diphosphate: step 4/9. The sequence is that of 1-(5-phosphoribosyl)-5-[(5-phosphoribosylamino)methylideneamino] imidazole-4-carboxamide isomerase from Actinobacillus pleuropneumoniae serotype 5b (strain L20).